The sequence spans 201 residues: Snake venom metalloproteinase trimerelysin-2 (201 aa).

At Gln1 the chain carries Pyrrolidone carboxylic acid. In terms of domain architecture, Peptidase M12B spans 6 to 201; sequence RYIELAIVVD…YNPQCILNAP (196 aa). Asn72 carries an N-linked (GlcNAc...) asparagine glycan. 3 disulfide bridges follow: Cys117–Cys196, Cys158–Cys180, and Cys160–Cys163. A Zn(2+)-binding site is contributed by His142. Glu143 is a catalytic residue. Residues His146 and His152 each contribute to the Zn(2+) site.

Belongs to the venom metalloproteinase (M12B) family. P-I subfamily. In terms of assembly, monomer. Requires Zn(2+) as cofactor. In terms of tissue distribution, expressed by the venom gland.

Its subcellular location is the secreted. The catalysed reaction is Cleavage of 3-Asn-|-Gln-4, 10-His-|-Leu-11 and 14-Ala-|-Leu-15 in the insulin B chain, and the bond Z-Gly-Pro-|-Leu-Gly-Pro in a small molecule substrate of microbial collagenase.. Functionally, major venom non-hemorrhagic metalloproteinase. In Protobothrops flavoviridis (Habu), this protein is Snake venom metalloproteinase trimerelysin-2.